The primary structure comprises 697 residues: SITS-binding protein (697 aa).

The interval 1–20 (MARRAKKMASNSGDSSPEPG) is disordered. Over 2-29 (ARRAKKMASNSGDSSPEPGIKEINETWK) the chain is Cytoplasmic. Residues 30–50 (GAIACLGVALLFLMTIGVLYW) traverse the membrane as a helical segment. N-linked (GlcNAc...) asparagine glycans are attached at residues Asn112, Asn134, Asn162, Asn386, Asn405, and Asn470. Transmembrane regions (helical) follow at residues 503 to 521 (GLIPSILHYSLLGYSFFIP) and 542 to 562 (WMQIATFLPVMSFSTPPWVFG). An N-linked (GlcNAc...) asparagine glycan is attached at Asn568.

Belongs to the glycosyl hydrolase 31 family. In terms of assembly, homodimer; disulfide-linked. Electroplax tissue, brain (200-fold less), and heart (500-fold less).

It is found in the membrane. Its function is as follows. This glycoprotein is probably not a functional part of the chloride channel. The protein is SITS-binding protein of Tetronarce californica (Pacific electric ray).